Reading from the N-terminus, the 238-residue chain is tRNA (guanine-N(7)-)-methyltransferase (238 aa).

Residues Glu70, Asp95, Asp122, and Asp145 each contribute to the S-adenosyl-L-methionine site. The active site involves Asp145. Residues Lys149, Asp181, and 216–219 (TKFE) each bind substrate.

The protein belongs to the class I-like SAM-binding methyltransferase superfamily. TrmB family.

The catalysed reaction is guanosine(46) in tRNA + S-adenosyl-L-methionine = N(7)-methylguanosine(46) in tRNA + S-adenosyl-L-homocysteine. Its pathway is tRNA modification; N(7)-methylguanine-tRNA biosynthesis. Its function is as follows. Catalyzes the formation of N(7)-methylguanine at position 46 (m7G46) in tRNA. The sequence is that of tRNA (guanine-N(7)-)-methyltransferase from Neisseria meningitidis serogroup B (strain ATCC BAA-335 / MC58).